A 221-amino-acid chain; its full sequence is Probable septum site-determining protein MinC (221 aa).

The protein belongs to the MinC family. Interacts with MinD and FtsZ.

In terms of biological role, cell division inhibitor that blocks the formation of polar Z ring septums. Rapidly oscillates between the poles of the cell to destabilize FtsZ filaments that have formed before they mature into polar Z rings. Prevents FtsZ polymerization. The chain is Probable septum site-determining protein MinC from Shewanella woodyi (strain ATCC 51908 / MS32).